Here is a 358-residue protein sequence, read N- to C-terminus: Alanine racemase (358 aa).

Lysine 35 acts as the Proton acceptor; specific for D-alanine in catalysis. At lysine 35 the chain carries N6-(pyridoxal phosphate)lysine. Substrate is bound at residue arginine 130. Tyrosine 255 serves as the catalytic Proton acceptor; specific for L-alanine. Methionine 303 contacts substrate.

It belongs to the alanine racemase family. It depends on pyridoxal 5'-phosphate as a cofactor.

The enzyme catalyses L-alanine = D-alanine. It participates in amino-acid biosynthesis; D-alanine biosynthesis; D-alanine from L-alanine: step 1/1. Its function is as follows. Catalyzes the interconversion of L-alanine and D-alanine. May also act on other amino acids. The protein is Alanine racemase (alr) of Shewanella piezotolerans (strain WP3 / JCM 13877).